The following is a 547-amino-acid chain: Chaperonin GroEL (547 aa).

Residues 30-33 (TLGP), K51, 87-91 (DGTTT), G415, 479-481 (NAA), and D495 each bind ATP. Residues 525 to 547 (PKEDSPGAGAGMGGMGGMGGMDM) are disordered. The span at 532–547 (AGAGMGGMGGMGGMDM) shows a compositional bias: gly residues.

It belongs to the chaperonin (HSP60) family. As to quaternary structure, forms a cylinder of 14 subunits composed of two heptameric rings stacked back-to-back. Interacts with the co-chaperonin GroES.

The protein resides in the cytoplasm. The enzyme catalyses ATP + H2O + a folded polypeptide = ADP + phosphate + an unfolded polypeptide.. Its function is as follows. Together with its co-chaperonin GroES, plays an essential role in assisting protein folding. The GroEL-GroES system forms a nano-cage that allows encapsulation of the non-native substrate proteins and provides a physical environment optimized to promote and accelerate protein folding. The polypeptide is Chaperonin GroEL (Nitrosomonas eutropha (strain DSM 101675 / C91 / Nm57)).